Consider the following 228-residue polypeptide: tRNA (guanine-N(1)-)-methyltransferase (228 aa).

Residues Gly111 and 130–135 contribute to the S-adenosyl-L-methionine site; that span reads IGDFVL.

This sequence belongs to the RNA methyltransferase TrmD family. As to quaternary structure, homodimer.

The protein localises to the cytoplasm. It carries out the reaction guanosine(37) in tRNA + S-adenosyl-L-methionine = N(1)-methylguanosine(37) in tRNA + S-adenosyl-L-homocysteine + H(+). In terms of biological role, specifically methylates guanosine-37 in various tRNAs. The chain is tRNA (guanine-N(1)-)-methyltransferase from Ureaplasma urealyticum serovar 10 (strain ATCC 33699 / Western).